The following is a 202-amino-acid chain: Cryptic protein (202 aa).

The signal sequence occupies residues 1-35 (MRANSPTQGISLKMHQARPLFLVTVALQLIGLGYS). Asn65 carries an N-linked (GlcNAc...) asparagine glycan. The EGF-like domain maps to 94–123 (PVSRCCHNGGTCVLGSFCVCPAYFTGRYCE). Cystine bridges form between Cys98–Cys105, Cys99–Cys111, and Cys113–Cys122. Asp166 carries GPI-anchor amidated aspartate lipidation. The propeptide at 167-202 (LKSFLSSGARGSRECSIPSLLLLVLCLLLQGVAGKG) is removed in mature form.

This sequence belongs to the EGF-CFC (Cripto-1/FRL1/Cryptic) family. Post-translationally, N-glycosylated. As to expression, no expressed in adult tissues.

It is found in the cell membrane. The protein resides in the secreted. Its function is as follows. Nodal coreceptor involved in the correct establishment of the left-right axis. May play a role in mesoderm and/or neural patterning during gastrulation. The protein is Cryptic protein (Cfc1) of Mus musculus (Mouse).